Reading from the N-terminus, the 400-residue chain is Cysteine desulfurase (400 aa).

Pyridoxal 5'-phosphate is bound by residues 71-72 (GT), Asn-150, Gln-178, and 198-200 (SGH). Position 201 is an N6-(pyridoxal phosphate)lysine (Lys-201). Pyridoxal 5'-phosphate is bound at residue Thr-236. Cys-324 serves as the catalytic Cysteine persulfide intermediate. Cys-324 is a [2Fe-2S] cluster binding site.

This sequence belongs to the class-V pyridoxal-phosphate-dependent aminotransferase family. NifS/IscS subfamily. As to quaternary structure, homodimer. Pyridoxal 5'-phosphate serves as cofactor.

The enzyme catalyses (sulfur carrier)-H + L-cysteine = (sulfur carrier)-SH + L-alanine. In terms of biological role, catalyzes the removal of elemental sulfur atoms from cysteine to produce alanine. Seems to participate in the biosynthesis of the nitrogenase metalloclusters by providing the inorganic sulfur required for the Fe-S core formation. In Nostoc sp. (strain PCC 7120 / SAG 25.82 / UTEX 2576), this protein is Cysteine desulfurase.